The following is a 398-amino-acid chain: S-adenosylmethionine synthase (398 aa).

His-16 serves as a coordination point for ATP. Asp-18 lines the Mg(2+) pocket. Glu-44 serves as a coordination point for K(+). Residues Glu-57 and Gln-100 each coordinate L-methionine. The tract at residues 100 to 110 (QSPDIAQGVNE) is flexible loop. ATP is bound by residues 175–177 (DAK), 242–243 (RF), Asp-251, 257–258 (RK), Ala-274, and Lys-278. Asp-251 lines the L-methionine pocket. Lys-282 contacts L-methionine.

This sequence belongs to the AdoMet synthase family. Homotetramer; dimer of dimers. Mg(2+) serves as cofactor. Requires K(+) as cofactor.

The protein resides in the cytoplasm. It catalyses the reaction L-methionine + ATP + H2O = S-adenosyl-L-methionine + phosphate + diphosphate. It participates in amino-acid biosynthesis; S-adenosyl-L-methionine biosynthesis; S-adenosyl-L-methionine from L-methionine: step 1/1. In terms of biological role, catalyzes the formation of S-adenosylmethionine (AdoMet) from methionine and ATP. The overall synthetic reaction is composed of two sequential steps, AdoMet formation and the subsequent tripolyphosphate hydrolysis which occurs prior to release of AdoMet from the enzyme. The polypeptide is S-adenosylmethionine synthase (Streptococcus agalactiae serotype Ia (strain ATCC 27591 / A909 / CDC SS700)).